Here is a 419-residue protein sequence, read N- to C-terminus: Double-stranded RNA-binding protein 1 (419 aa).

DRBM domains lie at Val15–Lys84 and Leu101–Ser170. The Bipartite nuclear localization signature appears at Lys207–Arg222. Tandem repeats lie at residues Glu247–Thr274, Glu275–Thr302, Glu303–Thr330, Glu331–Thr358, Glu359–Thr386, and Glu387–Thr414. The segment at Glu247–Thr414 is 6 X 28 AA repeats of E-K-I-E-T-T-P-N-L-E-[PS]-[PS]-S-C-M-[NS]-G-L-K-E-A-A-F-G-S-V-E-T.

In terms of assembly, homodimer. Heterodimer with DRB2, DRB4 or DRB5. Interacts with SE and DCL1. Interacts with RCF3, RS40 and RS41. Expressed in rosette and cauline leaves, stems, roots, flowers and siliques.

The protein resides in the nucleus. The protein localises to the nucleus speckle. Double-stranded RNA-binding protein involved in RNA-mediated post-transcriptional gene silencing (PTGS). Functions in the microRNAs (miRNAs) biogenesis by assisting DICER-LIKE 1 (DCL1) in the accurate processing from primary miRNAs (pri-miRNAs) to miRNAs in the nucleus. Forms a complex with SERRATE (SE) and DCL1 to promote accurate processing of pri-miRNAs by DCL1. Binds and assist DCL1 for accurate processing of precursor miRNAs (pre-miRNA). Indirectly involved in the production of trans-acting small interfering RNAs (ta-siRNAs) derived from the TAS1, TAS2 or TAS3 endogenous transcripts by participating in the production of their initiating miRNAs. Involved with argonaute 1 (AGO1) in the guide strand selection from miRNA duplexes, presumably by directional loading of the miRNA duplex (guide stand and passenger strand) onto the RNA-induced silencing complex (RISC) for passenger strand degradation. Does not participate in sense transgene-induced post-transcriptional gene silencing (S-PTGS). Involved in several plant development aspects and response to hormones through its role in miRNAs processing. The chain is Double-stranded RNA-binding protein 1 (DRB1) from Arabidopsis thaliana (Mouse-ear cress).